We begin with the raw amino-acid sequence, 220 residues long: Zinc-finger homeodomain protein 2 (220 aa).

A compositionally biased stretch (acidic residues) spans 1 to 11 (MNFEDQEEDME). Residues 1–40 (MNFEDQEEDMEMSGVNPPCGYDSLSGEGATSSGGGGVGRS) form a disordered region. Over residues 31 to 40 (SSGGGGVGRS) the composition is skewed to gly residues. A ZF-HD dimerization-type zinc finger spans residues 49-98 (YRECLKNHAVNIGGHAVDGCCEFMPSGEDGTLDALKCAACGCHRNFHRKE). Residues 100-160 (ESIGGRAHRV…SSSGGTTKRF (61 aa)) are disordered. A DNA-binding region (homeobox; atypical) is located at residues 157–220 (TKRFRTKFTA…NNKNSLGKKP (64 aa)).

Homo or heterodimer. Interacts with ZHD1, ZHD3, ZHD4, ZHD5, ZHD6, ZHD7, ZHD8, ZHD9, ZHD10 and ZHD11. Mostly expressed in flowers and, to a lower extent, in inflorescence, stems and leaves.

It is found in the nucleus. In terms of biological role, essential protein. Putative transcription factor. The protein is Zinc-finger homeodomain protein 2 (ZHD1) of Arabidopsis thaliana (Mouse-ear cress).